Reading from the N-terminus, the 303-residue chain is Methionine import ATP-binding protein MetN (303 aa).

One can recognise an ABC transporter domain in the interval 1–222 (MLDQISLEIP…PDPKMRHFLG (222 aa)). 19 to 26 (GHSGAGKS) is a binding site for ATP.

The protein belongs to the ABC transporter superfamily. Methionine importer (TC 3.A.1.24) family. As to quaternary structure, the complex is composed of two ATP-binding proteins (MetN), two transmembrane proteins (MetI) and a solute-binding protein (MetQ).

Its subcellular location is the cell inner membrane. It carries out the reaction L-methionine(out) + ATP + H2O = L-methionine(in) + ADP + phosphate + H(+). The enzyme catalyses D-methionine(out) + ATP + H2O = D-methionine(in) + ADP + phosphate + H(+). In terms of biological role, part of the ABC transporter complex MetNIQ involved in methionine import. Responsible for energy coupling to the transport system. The sequence is that of Methionine import ATP-binding protein MetN from Wolinella succinogenes (strain ATCC 29543 / DSM 1740 / CCUG 13145 / JCM 31913 / LMG 7466 / NCTC 11488 / FDC 602W) (Vibrio succinogenes).